The primary structure comprises 233 residues: 2,3-bisphosphoglycerate-dependent phosphoglycerate mutase (233 aa).

Substrate is bound by residues 8–15 (RHGQSLWN), 21–22 (TG), Arg-60, 116–119 (ERYY), Lys-127, 143–144 (RR), and 187–188 (GN). His-9 functions as the Tele-phosphohistidine intermediate in the catalytic mechanism. Residue Glu-116 is the Proton donor/acceptor of the active site.

The protein belongs to the phosphoglycerate mutase family. BPG-dependent PGAM subfamily.

It catalyses the reaction (2R)-2-phosphoglycerate = (2R)-3-phosphoglycerate. It participates in carbohydrate degradation; glycolysis; pyruvate from D-glyceraldehyde 3-phosphate: step 3/5. Catalyzes the interconversion of 2-phosphoglycerate and 3-phosphoglycerate. The protein is 2,3-bisphosphoglycerate-dependent phosphoglycerate mutase of Gloeothece citriformis (strain PCC 7424) (Cyanothece sp. (strain PCC 7424)).